We begin with the raw amino-acid sequence, 378 residues long: Mevalonate kinase (378 aa).

Residues lysine 10, serine 138, and 143–149 (GSGLGSS) each bind ATP. Mg(2+) is bound by residues serine 149 and glutamate 193. The active-site Proton acceptor is the aspartate 204.

This sequence belongs to the GHMP kinase family. Mevalonate kinase subfamily. Mg(2+) serves as cofactor.

The protein resides in the cytoplasm. It catalyses the reaction (R)-mevalonate + ATP = (R)-5-phosphomevalonate + ADP + H(+). The protein operates within isoprenoid biosynthesis; isopentenyl diphosphate biosynthesis via mevalonate pathway; isopentenyl diphosphate from (R)-mevalonate: step 1/3. Its activity is inhibited in vitro by geranyl pyrophosphate (GPP) and farnesyl pyrophosphate (FPP) that bind competitively at the ATP-binding site on the enzyme. Functionally, catalyzes the phosphorylation of mevalonate to mevalonate 5-phosphate, a key step in isoprenoid and cholesterol biosynthesis. This is Mevalonate kinase from Arabidopsis thaliana (Mouse-ear cress).